Reading from the N-terminus, the 186-residue chain is ATP synthase subunit delta (186 aa).

Belongs to the ATPase delta chain family. F-type ATPases have 2 components, F(1) - the catalytic core - and F(0) - the membrane proton channel. F(1) has five subunits: alpha(3), beta(3), gamma(1), delta(1), epsilon(1). F(0) has three main subunits: a(1), b(2) and c(10-14). The alpha and beta chains form an alternating ring which encloses part of the gamma chain. F(1) is attached to F(0) by a central stalk formed by the gamma and epsilon chains, while a peripheral stalk is formed by the delta and b chains.

It is found in the cell membrane. In terms of biological role, f(1)F(0) ATP synthase produces ATP from ADP in the presence of a proton or sodium gradient. F-type ATPases consist of two structural domains, F(1) containing the extramembraneous catalytic core and F(0) containing the membrane proton channel, linked together by a central stalk and a peripheral stalk. During catalysis, ATP synthesis in the catalytic domain of F(1) is coupled via a rotary mechanism of the central stalk subunits to proton translocation. Functionally, this protein is part of the stalk that links CF(0) to CF(1). It either transmits conformational changes from CF(0) to CF(1) or is implicated in proton conduction. This Mycoplasmopsis agalactiae (strain NCTC 10123 / CIP 59.7 / PG2) (Mycoplasma agalactiae) protein is ATP synthase subunit delta.